The following is a 1663-amino-acid chain: TPR repeat-containing protein DDB_G0287407 (1663 aa).

Disordered regions lie at residues 84 to 109 (RKTQ…QKGQ) and 326 to 359 (SEYS…NSNQ). The span at 89–105 (TSSNGSTSTTTTTTTTT) shows a compositional bias: low complexity. The span at 333-352 (DDGENDQSDDDDDNEDDDDF) shows a compositional bias: acidic residues. TPR repeat units follow at residues 1110–1143 (SDVW…YINN), 1150–1183 (AKVD…YTKE), 1192–1225 (AITL…CESK), 1234–1269 (ADIA…TESK), 1278–1311 (ARIL…YEAR), and 1320–1353 (SQIL…TKKI). Disordered stretches follow at residues 1500-1528 (VAQP…QQQR) and 1544-1571 (QKVS…RQNT). A coiled-coil region spans residues 1516–1547 (RTQQAIQQGQQQRQQVQQQQQQVQQQMSQKVS). 2 stretches are compositionally biased toward low complexity: residues 1518 to 1528 (QQAIQQGQQQR) and 1544 to 1563 (QKVS…QPSQ).

This Dictyostelium discoideum (Social amoeba) protein is TPR repeat-containing protein DDB_G0287407.